The chain runs to 334 residues: Beta-ketoacyl-[acyl-carrier-protein] synthase III (334 aa).

Catalysis depends on residues Cys114 and His253. The tract at residues Gln254 to Arg258 is ACP-binding. The active site involves Asn283.

Belongs to the thiolase-like superfamily. FabH family. In terms of assembly, homodimer.

It localises to the cytoplasm. It catalyses the reaction malonyl-[ACP] + acetyl-CoA + H(+) = 3-oxobutanoyl-[ACP] + CO2 + CoA. The protein operates within lipid metabolism; fatty acid biosynthesis. In terms of biological role, catalyzes the condensation reaction of fatty acid synthesis by the addition to an acyl acceptor of two carbons from malonyl-ACP. Catalyzes the first condensation reaction which initiates fatty acid synthesis and may therefore play a role in governing the total rate of fatty acid production. Possesses both acetoacetyl-ACP synthase and acetyl transacylase activities. Its substrate specificity determines the biosynthesis of branched-chain and/or straight-chain of fatty acids. In Campylobacter concisus (strain 13826), this protein is Beta-ketoacyl-[acyl-carrier-protein] synthase III.